The primary structure comprises 20 residues: Calreticulin (20 aa).

Belongs to the calreticulin family. In terms of processing, glycosylated.

It is found in the endoplasmic reticulum lumen. In terms of biological role, molecular calcium-binding chaperone promoting folding, oligomeric assembly and quality control in the ER via the calreticulin/calnexin cycle. This lectin may interact transiently with almost all of the monoglucosylated glycoproteins that are synthesized in the ER. The polypeptide is Calreticulin (Spinacia oleracea (Spinach)).